The primary structure comprises 175 residues: Ribosome-binding factor A (175 aa).

The tract at residues 129-175 is disordered; the sequence is GAKPAGEADPYRDRGSADEPSDAGGLVIRTSDGLEAENTGDDYQAED. Acidic residues predominate over residues 162 to 175; the sequence is LEAENTGDDYQAED.

It belongs to the RbfA family. As to quaternary structure, monomer. Binds 30S ribosomal subunits, but not 50S ribosomal subunits or 70S ribosomes.

The protein localises to the cytoplasm. Functionally, one of several proteins that assist in the late maturation steps of the functional core of the 30S ribosomal subunit. Associates with free 30S ribosomal subunits (but not with 30S subunits that are part of 70S ribosomes or polysomes). Required for efficient processing of 16S rRNA. May interact with the 5'-terminal helix region of 16S rRNA. This chain is Ribosome-binding factor A, found in Mycobacterium marinum (strain ATCC BAA-535 / M).